A 316-amino-acid polypeptide reads, in one-letter code: Lipooligosaccharide heptosyltransferase 2 (316 aa).

This sequence belongs to the glycosyltransferase 9 family.

It carries out the reaction an L-alpha-D-Hep-(1-&gt;5)-[alpha-Kdo-(2-&gt;4)]-alpha-Kdo-(2-&gt;6)-lipid A + ADP-L-glycero-beta-D-manno-heptose = an L-alpha-D-Hep-(1-&gt;3)-L-alpha-D-Hep-(1-&gt;5)-[alpha-Kdo-(2-&gt;4)]-alpha-Kdo-(2-&gt;6)-lipid A + ADP + H(+). It participates in bacterial outer membrane biogenesis; LOS core biosynthesis. Glycosyltransferase involved in the biosynthesis of the core oligosaccharide region of lipooligosaccharide (LOS). Catalyzes the addition of the second heptose unit to the heptosyl-Kdo2-lipid A module. The chain is Lipooligosaccharide heptosyltransferase 2 from Campylobacter jejuni subsp. jejuni serotype O:6 (strain 81116 / NCTC 11828).